The primary structure comprises 1582 residues: Sca1 complex scaffold protein scaA (1582 aa).

Composition is skewed to low complexity over residues 1–14 (MSSL…TPST) and 109–131 (LSPS…TTST). 2 disordered regions span residues 1–22 (MSSL…TFSK) and 108–147 (GLSP…QIKK). A TPR 1 repeat occupies 4 to 37 (LDPSLSTTPSTNRRGTFSKAKSFRRAALNLEPQG). Residues 166 to 199 (IYTSFPESMAFDDYMDYEESLVEWKRQVEQNLGI) form a TPR 2 repeat. Residues 246–349 (IKETNSSVND…PSTGSLAGFV (104 aa)) form a disordered region. 3 stretches are compositionally biased toward polar residues: residues 249-267 (TNSS…PTLR), 288-310 (NKDN…NSGI), and 318-332 (SDTS…QLDG). Phosphoserine; by PKB is present on Ser-359. Residues 400–600 (RSGSGFGMDH…QRQTSTWFRG (201 aa)) form a gefA and gefH binding region. Disordered stretches follow at residues 468 to 493 (PKNS…GVGG) and 686 to 734 (SLSS…DKDK). 2 stretches are compositionally biased toward gly residues: residues 478–493 (GSGG…GVGG) and 694–714 (QQQG…GSGS). Residues 715 to 726 (GLNMSGTSGSSG) show a composition bias toward low complexity. One copy of the TPR 3 repeat lies at 742 to 777 (MHSINNTTNVGTKEDRRQYTKILQTYEQRLQFSFRL). Residues 864-875 (GGGSGGASGGGI) are compositionally biased toward gly residues. A disordered region spans residues 864–978 (GGGSGGASGG…GSISTHPNTP (115 aa)). Residues 903–928 (HIPSGSSLLSSPPNRQGSTGSFSFIG) show a composition bias toward low complexity. Over residues 940 to 953 (NSSSLESPRTQSQL) the composition is skewed to polar residues. A compositionally biased stretch (low complexity) spans 960-972 (GSSPRSHSGGSIS). The tract at residues 1000–1400 (FLDLTNEKLA…SIKKEGNLYN (401 aa)) is pppA and pho2B binding. One copy of the TPR 4 repeat lies at 1080 to 1113 (TQEVVRLVFVYYYLGIIQERLNFFSNNVGILGFV).

As to quaternary structure, component of the Sca1 complex composed of at least gefA, gefH, scaA, phr, and the protein phosphatase 2A subunits pppA and pho2B. In terms of processing, phosphorylated at Ser-359 by PKB and PKBR1 is induced by chemoattractant.

The protein localises to the cell membrane. In terms of biological role, component of the Sca1 complex, a regulator of cell motility, chemotaxis and signal relay. The Sca1 complex is recruited to the plasma membrane in a chemoattractant- and F-actin-dependent manner and is enriched at the leading edge of chemotaxing cells where it regulates F-actin dynamics and signal relay by controlling the activation of rasC and the downstream target of rapamycin complex 2 (TORC2)-Akt/protein kinase B (PKB) pathway. ScaA acts as a molecular scaffold, bringing together gefA, gefH and phr with PP2A. The polypeptide is Sca1 complex scaffold protein scaA (Dictyostelium discoideum (Social amoeba)).